The chain runs to 130 residues: Large ribosomal subunit protein eL32 (130 aa).

It belongs to the eukaryotic ribosomal protein eL32 family. Part of the 50S ribosomal subunit.

The sequence is that of Large ribosomal subunit protein eL32 from Pyrococcus furiosus (strain ATCC 43587 / DSM 3638 / JCM 8422 / Vc1).